We begin with the raw amino-acid sequence, 61 residues long: Small ribosomal subunit protein uS14 (61 aa).

Cys24, Cys27, Cys40, and Cys43 together coordinate Zn(2+).

Belongs to the universal ribosomal protein uS14 family. Zinc-binding uS14 subfamily. Part of the 30S ribosomal subunit. Contacts proteins S3 and S10. Zn(2+) is required as a cofactor.

Functionally, binds 16S rRNA, required for the assembly of 30S particles and may also be responsible for determining the conformation of the 16S rRNA at the A site. In Clostridium kluyveri (strain NBRC 12016), this protein is Small ribosomal subunit protein uS14.